Consider the following 555-residue polypeptide: CTP synthase (555 aa).

Positions 1 to 267 (MAKYIFVTGG…GNYLTLRLGL (267 aa)) are amidoligase domain. S13 is a binding site for CTP. S13 contributes to the UTP binding site. 14 to 19 (SVGKGI) serves as a coordination point for ATP. Y54 contributes to the L-glutamine binding site. An ATP-binding site is contributed by D71. D71 and E141 together coordinate Mg(2+). Residues 148 to 150 (DIE), 188 to 193 (KTKPTQ), and K224 contribute to the CTP site. Residues 188–193 (KTKPTQ) and K224 each bind UTP. In terms of domain architecture, Glutamine amidotransferase type-1 spans 292–535 (AIALVGKYVE…IAAAAQTFRE (244 aa)). G354 contributes to the L-glutamine binding site. The active-site Nucleophile; for glutamine hydrolysis is C381. L-glutamine is bound by residues 382-385 (LGMQ), E406, and R463. Catalysis depends on residues H508 and E510.

This sequence belongs to the CTP synthase family. In terms of assembly, homotetramer.

The catalysed reaction is UTP + L-glutamine + ATP + H2O = CTP + L-glutamate + ADP + phosphate + 2 H(+). It carries out the reaction L-glutamine + H2O = L-glutamate + NH4(+). The enzyme catalyses UTP + NH4(+) + ATP = CTP + ADP + phosphate + 2 H(+). The protein operates within pyrimidine metabolism; CTP biosynthesis via de novo pathway; CTP from UDP: step 2/2. With respect to regulation, allosterically activated by GTP, when glutamine is the substrate; GTP has no effect on the reaction when ammonia is the substrate. The allosteric effector GTP functions by stabilizing the protein conformation that binds the tetrahedral intermediate(s) formed during glutamine hydrolysis. Inhibited by the product CTP, via allosteric rather than competitive inhibition. In terms of biological role, catalyzes the ATP-dependent amination of UTP to CTP with either L-glutamine or ammonia as the source of nitrogen. Regulates intracellular CTP levels through interactions with the four ribonucleotide triphosphates. This chain is CTP synthase, found in Roseiflexus castenholzii (strain DSM 13941 / HLO8).